The chain runs to 231 residues: Acyltransferase PGAP2 (231 aa).

Residues 1–22 (MQQVPYGSVDRDKPLIRVPFTR) are Cytoplasmic-facing. A helical membrane pass occupies residues 23 to 43 (LAVITVCLPLLGLVACIVLAM). Residues 44-78 (LYHYNDATYTHCQVPNYLPSISAAISLTPERYIWR) are Lumenal-facing. Residues 79 to 99 (FSIGLHSAPRFLVAAAYLSFY) form a helical membrane-spanning segment. At 100-110 (RGRFSRRLTEQ) the chain is on the cytoplasmic side. A helical transmembrane segment spans residues 111–131 (LLSGFTFLLALSENVGLLLLT). Residues 132 to 146 (YVSSTETYSVHKSGF) lie on the Lumenal side of the membrane. A helical transmembrane segment spans residues 147–167 (ILFIGSSLFHMLCTCKLWSLI). The Cytoplasmic segment spans residues 168–179 (VKYSISSEEMMS). A helical membrane pass occupies residues 180 to 200 (YWFKLRLFLFNGGCCVLAVYF). The Lumenal portion of the chain corresponds to 201-231 (YRRHNTYCEEGITHASRCVSIWWCCPTWPST).

It belongs to the PGAP2 family.

The protein resides in the golgi apparatus membrane. Involved in the fatty acid remodeling steps of GPI-anchor maturation where the unsaturated acyl chain at sn-2 of inositol phosphate is replaced by a saturated stearoyl chain. May catalyze the second step of the fatty acid remodeling, by reacylating a lyso-GPI intermediate at sn-2 of inositol phosphate by a saturated chain. The fatty acid remodeling steps is critical for the integration of GPI-APs into lipid rafts. The sequence is that of Acyltransferase PGAP2 from Danio rerio (Zebrafish).